The primary structure comprises 70 residues: Small ribosomal subunit protein eS17 (70 aa).

The protein belongs to the eukaryotic ribosomal protein eS17 family.

This is Small ribosomal subunit protein eS17 from Methanopyrus kandleri (strain AV19 / DSM 6324 / JCM 9639 / NBRC 100938).